A 181-amino-acid chain; its full sequence is Small ribosomal subunit protein bS16 (181 aa).

The interval 150 to 181 (KKAAEEAAKAAAEAPAEEAAPAEEAATEAAAE) is disordered. Low complexity predominate over residues 158–181 (KAAAEAPAEEAAPAEEAATEAAAE).

It belongs to the bacterial ribosomal protein bS16 family.

The sequence is that of Small ribosomal subunit protein bS16 from Bacteroides fragilis (strain ATCC 25285 / DSM 2151 / CCUG 4856 / JCM 11019 / LMG 10263 / NCTC 9343 / Onslow / VPI 2553 / EN-2).